A 450-amino-acid chain; its full sequence is 3-phosphoshikimate 1-carboxyvinyltransferase (450 aa).

3 residues coordinate 3-phosphoshikimate: Lys-28, Ser-29, and Arg-33. Lys-28 contributes to the phosphoenolpyruvate binding site. Phosphoenolpyruvate-binding residues include Gly-100 and Arg-128. Ser-173, Gln-175, Asp-326, and Lys-353 together coordinate 3-phosphoshikimate. Position 175 (Gln-175) interacts with phosphoenolpyruvate. The active-site Proton acceptor is Asp-326. Phosphoenolpyruvate contacts are provided by Arg-357 and Arg-402.

It belongs to the EPSP synthase family. In terms of assembly, monomer.

It localises to the cytoplasm. The enzyme catalyses 3-phosphoshikimate + phosphoenolpyruvate = 5-O-(1-carboxyvinyl)-3-phosphoshikimate + phosphate. It participates in metabolic intermediate biosynthesis; chorismate biosynthesis; chorismate from D-erythrose 4-phosphate and phosphoenolpyruvate: step 6/7. Functionally, catalyzes the transfer of the enolpyruvyl moiety of phosphoenolpyruvate (PEP) to the 5-hydroxyl of shikimate-3-phosphate (S3P) to produce enolpyruvyl shikimate-3-phosphate and inorganic phosphate. This chain is 3-phosphoshikimate 1-carboxyvinyltransferase, found in Brucella abortus (strain S19).